The sequence spans 544 residues: Chaperonin GroEL (544 aa).

Residues Thr29 to Pro32, Asp86 to Thr90, Gly413, Asn476 to Ala478, and Asp492 contribute to the ATP site.

It belongs to the chaperonin (HSP60) family. As to quaternary structure, forms a cylinder of 14 subunits composed of two heptameric rings stacked back-to-back. Interacts with the co-chaperonin GroES.

It localises to the cytoplasm. It carries out the reaction ATP + H2O + a folded polypeptide = ADP + phosphate + an unfolded polypeptide.. Functionally, together with its co-chaperonin GroES, plays an essential role in assisting protein folding. The GroEL-GroES system forms a nano-cage that allows encapsulation of the non-native substrate proteins and provides a physical environment optimized to promote and accelerate protein folding. This Bacillus mycoides (strain KBAB4) (Bacillus weihenstephanensis) protein is Chaperonin GroEL.